Reading from the N-terminus, the 693-residue chain is Elongation factor G 1 (693 aa).

The tr-type G domain maps to 4-281; that stretch reads NKLRNIGISA…AVTRFLPSPH (278 aa). GTP contacts are provided by residues 13-20, 80-84, and 134-137; these read AHIDSGKT, DTPGH, and NKCD.

Belongs to the TRAFAC class translation factor GTPase superfamily. Classic translation factor GTPase family. EF-G/EF-2 subfamily.

The protein localises to the cytoplasm. In terms of biological role, catalyzes the GTP-dependent ribosomal translocation step during translation elongation. During this step, the ribosome changes from the pre-translocational (PRE) to the post-translocational (POST) state as the newly formed A-site-bound peptidyl-tRNA and P-site-bound deacylated tRNA move to the P and E sites, respectively. Catalyzes the coordinated movement of the two tRNA molecules, the mRNA and conformational changes in the ribosome. In Borrelia garinii subsp. bavariensis (strain ATCC BAA-2496 / DSM 23469 / PBi) (Borreliella bavariensis), this protein is Elongation factor G 1.